Reading from the N-terminus, the 298-residue chain is L-xylulose reductase (298 aa).

NADP(+) contacts are provided by Ile-19, Asp-68, and Asn-103. Residues Ser-161, Ser-162, and Tyr-175 each act as proton donor in the active site. Positions 175, 179, and 207 each coordinate NADP(+). The active-site Lowers pKa of active site Tyr is the Lys-179.

Belongs to the short-chain dehydrogenases/reductases (SDR) family.

The catalysed reaction is xylitol + NADP(+) = L-xylulose + NADPH + H(+). Its pathway is carbohydrate degradation; L-arabinose degradation via L-arabinitol; D-xylulose 5-phosphate from L-arabinose (fungal route): step 3/5. In terms of biological role, L-xylulose reductase involved in the catabolism of L-arabinose through an oxidoreductive pathway. Catalyzes the NADPH-dependent reduction of L-xylulose. This chain is L-xylulose reductase, found in Aspergillus niger (strain ATCC 1015 / CBS 113.46 / FGSC A1144 / LSHB Ac4 / NCTC 3858a / NRRL 328 / USDA 3528.7).